We begin with the raw amino-acid sequence, 446 residues long: tRNA modification GTPase MnmE (446 aa).

Positions 22, 80, and 119 each coordinate (6S)-5-formyl-5,6,7,8-tetrahydrofolate. Positions 215-370 (GLSLVIAGRP…LKKVIKQVVG (156 aa)) constitute a TrmE-type G domain. K(+) is bound at residue Asn225. Residues 225–230 (NAGKST), 244–250 (TEIAGTT), and 269–272 (DTAG) each bind GTP. A Mg(2+)-binding site is contributed by Ser229. Thr244, Ile246, and Thr249 together coordinate K(+). Thr250 contacts Mg(2+). Lys446 contacts (6S)-5-formyl-5,6,7,8-tetrahydrofolate.

The protein belongs to the TRAFAC class TrmE-Era-EngA-EngB-Septin-like GTPase superfamily. TrmE GTPase family. As to quaternary structure, homodimer. Heterotetramer of two MnmE and two MnmG subunits. K(+) serves as cofactor.

Its subcellular location is the cytoplasm. Exhibits a very high intrinsic GTPase hydrolysis rate. Involved in the addition of a carboxymethylaminomethyl (cmnm) group at the wobble position (U34) of certain tRNAs, forming tRNA-cmnm(5)s(2)U34. The polypeptide is tRNA modification GTPase MnmE (Legionella pneumophila (strain Paris)).